Reading from the N-terminus, the 420-residue chain is UDP-glucuronic acid decarboxylase 1 (420 aa).

N-acetylmethionine is present on Met1. Topologically, residues 1–19 (MVSKALLRLVSAVNRRRMK) are cytoplasmic. The chain crosses the membrane as a helical; Signal-anchor for type II membrane protein span at residues 20–40 (LLLGIALLAYVASVWGNFVNM). The Lumenal segment spans residues 41-420 (RSIQENGELK…RIKKGRTRHN (380 aa)). Thr94 carries the phosphothreonine modification. The NAD(+) site is built by Gly98, Phe99, Val100, Asp119, Asn120, Phe122, Thr123, Gly124, Asp144, and Val145. The UDP-alpha-D-glucuronate site is built by Leu149 and Tyr150. NAD(+) is bound by residues Leu159 and Ser161. Lys177 contacts UDP-alpha-D-glucuronate. NAD(+) is bound at residue Thr178. UDP-alpha-D-glucuronate-binding residues include Asn185, Gly188, Lys191, and Arg192. 3 residues coordinate NAD(+): Ala200, Tyr231, and Lys235. The active-site Proton acceptor is the Tyr231. Residues Tyr245, Gln248, and Glu249 each contribute to the UDP-alpha-D-glucuronate site. Residues Thr261, His267, and Arg272 each coordinate NAD(+). A glycan (N-linked (GlcNAc...) asparagine) is linked at Asn316.

It belongs to the NAD(P)-dependent epimerase/dehydratase family. UDP-glucuronic acid decarboxylase subfamily. As to quaternary structure, homodimer and homotetramer. Interacts with AKT1. Requires NAD(+) as cofactor.

The protein resides in the golgi apparatus. It is found in the golgi stack membrane. It carries out the reaction UDP-alpha-D-glucuronate + H(+) = UDP-alpha-D-xylose + CO2. Its pathway is nucleotide-sugar biosynthesis; UDP-alpha-D-xylose biosynthesis; UDP-alpha-D-xylose from UDP-alpha-D-glucuronate: step 1/1. Its function is as follows. Catalyzes the NAD-dependent decarboxylation of UDP-glucuronic acid to UDP-xylose. Necessary for the biosynthesis of the core tetrasaccharide in glycosaminoglycan biosynthesis. This chain is UDP-glucuronic acid decarboxylase 1 (UXS1), found in Pongo abelii (Sumatran orangutan).